Consider the following 436-residue polypeptide: uncharacterized protein (436 aa).

The signal sequence occupies residues Met1–Gly20. Coiled coils occupy residues Glu25–Asn87, Met154–Glu207, and Glu247–Leu329. Positions Glu371–Ser390 are enriched in acidic residues. The tract at residues Glu371–Arg419 is disordered. Over residues Arg404–Ser415 the composition is skewed to basic and acidic residues.

Component of the acid-insoluble organic matrix of the aragonitic skeleton (at protein level).

The protein resides in the secreted. This is an uncharacterized protein from Acropora millepora (Staghorn coral).